A 372-amino-acid chain; its full sequence is Queuine tRNA-ribosyltransferase (372 aa).

Aspartate 92 functions as the Proton acceptor in the catalytic mechanism. Substrate contacts are provided by residues 92-96, aspartate 146, glutamine 188, and glycine 215; that span reads DSGGY. The RNA binding stretch occupies residues 246-252; it reads GIGSLKE. The Nucleophile role is filled by aspartate 265. Positions 270–274 are RNA binding; important for wobble base 34 recognition; sequence TRLGR. The Zn(2+) site is built by cysteine 303, cysteine 305, cysteine 308, and histidine 334.

It belongs to the queuine tRNA-ribosyltransferase family. In terms of assembly, homodimer. Within each dimer, one monomer is responsible for RNA recognition and catalysis, while the other monomer binds to the replacement base PreQ1. Zn(2+) serves as cofactor.

The catalysed reaction is 7-aminomethyl-7-carbaguanine + guanosine(34) in tRNA = 7-aminomethyl-7-carbaguanosine(34) in tRNA + guanine. It functions in the pathway tRNA modification; tRNA-queuosine biosynthesis. In terms of biological role, catalyzes the base-exchange of a guanine (G) residue with the queuine precursor 7-aminomethyl-7-deazaguanine (PreQ1) at position 34 (anticodon wobble position) in tRNAs with GU(N) anticodons (tRNA-Asp, -Asn, -His and -Tyr). Catalysis occurs through a double-displacement mechanism. The nucleophile active site attacks the C1' of nucleotide 34 to detach the guanine base from the RNA, forming a covalent enzyme-RNA intermediate. The proton acceptor active site deprotonates the incoming PreQ1, allowing a nucleophilic attack on the C1' of the ribose to form the product. After dissociation, two additional enzymatic reactions on the tRNA convert PreQ1 to queuine (Q), resulting in the hypermodified nucleoside queuosine (7-(((4,5-cis-dihydroxy-2-cyclopenten-1-yl)amino)methyl)-7-deazaguanosine). This Prochlorococcus marinus (strain AS9601) protein is Queuine tRNA-ribosyltransferase.